The sequence spans 179 residues: Large ribosomal subunit protein uL5 (179 aa).

It belongs to the universal ribosomal protein uL5 family. Part of the 50S ribosomal subunit; part of the 5S rRNA/L5/L18/L25 subcomplex. Contacts the 5S rRNA and the P site tRNA. Forms a bridge to the 30S subunit in the 70S ribosome.

In terms of biological role, this is one of the proteins that bind and probably mediate the attachment of the 5S RNA into the large ribosomal subunit, where it forms part of the central protuberance. In the 70S ribosome it contacts protein S13 of the 30S subunit (bridge B1b), connecting the 2 subunits; this bridge is implicated in subunit movement. Contacts the P site tRNA; the 5S rRNA and some of its associated proteins might help stabilize positioning of ribosome-bound tRNAs. The polypeptide is Large ribosomal subunit protein uL5 (Prochlorococcus marinus (strain MIT 9303)).